A 2432-amino-acid chain; its full sequence is MSFNLNNALDDKITVVRGIPGDIVIFGIDGTIADSGVPVSIGSGQAKQPTAVPGDLAVFGSGVNQGQTIDSGLTVDDSSVSLPTVLWSSQKIESLIPTGSFLPLAGGTMTGTIISKDIVVPSGNVITLTDLPTVGTSAANKTYVDSKVSPGGPFLPLTGGTMSGDIVIQTGDIISIADLPITANSAANKAYVDSQISSGVPNATPTVLGKIQLAGDFDVTSTATVPVIKSATTSLEGKIQLAGDFDSSSTASIPIIKSATTLIEGKIQLAGDLTGTATSPLVAPGSITISKMAPLSASSKLIGSSSSTTVAEIGVGGSLEISSGILQENIPSLSNIFLPLSGGTMAGNIIVPTGDYITITDPPTVGTGAANKAYVDANITPNATPTVLGKIQLSGDISGTAIAPVVSPGAITLSKMANLNAVSNLIGSSNTNVTPTNISLGSNLQMTGTTLNVNLTSLSGSFLSLLGGTMSGNIIIPSGDLISIADAPVSGTSAANKSYVDSQIIVNATPNATSTVLGKIQLTGDLLGSSATFPTVAPGAITLSKLANLSSPSKLIGSGSTSSSPANITLGTSLSMSGTSLNVVPTFSNPTFNGTISGTAVLGVSNGGTGNSTLTGYVVGNGTAPFTAVTSIPVSNVNGAVQSVNGVFPDLSGNVTVTLGTVTTGTLAALPPVGPPLVNGDIYVVSGDPTPSNNGLTFIYSTTPTNQWLEISPSFGSLDARYLQLSGGTMSGNIVIPSGNFITLTSLPVNPTDAANKSYVDVNITPSATTSLQGKVQLSGDLSGVASAPVITTGAITLTKMANLTSTSSLIGSSSTSTSPSQLSLGSNLQISGTTLDVNTSSLSGTFLPLTGGTMSGNIVIPTGDLISITDAPTIGTSAANKAYVDANITPNATSTVLGKIQLAGDLLGSSATLPTISAGAVTLSKMANLSTTMSLIGSSSTSNLVSQLSLGSNLQISGTTLDVNTSSLSGTFLPLAGGTMSGNIVIPTGDLISIADAPTVGTSAANKAYVDANITPNATTTVLGKIQLSGDFDSTSTATVPVIKSATSSIQGKIQLSGDLTGSSTSPTIAAGAITLVKMANLSGNSQIIGSSSTASTPTNLTLGSGLQISGTVLSVNSATLTVPPATATTIGGIEMLGDLTGSVATAPTVATGAITLAKMANLSGNSQIIGSSSTTSTPTNLTLGSGLQISGTVLSVNSATLTVPPATSTSLGGIEMLGDLTGSVATAPTVAAGAITLAKMANLSGNSQIIGSSSTASTPVNLTLGNFLQMTGTVLNVNSSSLSGTFLPLSGGTMSGNIVIPTGDLISIADAPTVGTSAANKAYVDAQIISATPNATTTTLGKIQLSGDFDSTSTATVPIIKSATSSIQGKIQLSGDLTGSSISPTVAAGAITLAKMANLSGNSQIIGSSSTTSSPTNLTLGSGLQISGTVLSVNSATLTVPPATATTIGGIEMLGDLTGSVATAPTVAAGAITLAKMANLSGSSQIIGSSSTTSAPTNLTLGSGLQITSTVLSISAATSSTLGGIEMLGDLTGSVATAPTVAAGAITLAKMANLSGNSQIIGSSSTASTPTNLTLGSGLQISGTVLSVNSATLTVPPATATTIGGIEMLGDLTGSVATAPTVAAGAITLAKMANLSGNSQIIGSSSTASTPTNLTLGSGLQISGTVLSVNSATLTVPPATATTIGGIEMLGDLTGSVATAPTVAAGAITLAKMANLSGNSQIIGSSSTASTPTNLTLGSGLQISGTVLSINSATLTVPPATATTIGGIEMLGDLTGSVATAPTVAAGAITLAKMANLSGNSQIIGSSSTASTPTNLTLGSGLQISGTILNVNTTSLSSTFLPLAGGTMSGNIIIPTGDLISIADAPLVGTSGANKSYVDSQIIANATPSATTGIQGKIQLAGDLGGSGTTASSPVISSGAITLTKMANLSGNSQIIGSGSTSSSPVNLTLGSGLQISGTVLSVNSATLTVPPATATTIGGIEMLGDLTGSVATAPTIAAGAITLAKMANLSGNSQIIGSSSTTSTPTNLTLGSGLQISGTVLSVNSATLTVPPATATTIGGIEMLGDLTGSVATAPTVATGAITLSKMANLSGNSQIIGSSSTTSTPTNLTLGSGLQISGTVLSVNSATLTVPPATATTIGGIEMLGDLTGSVATAPTVAAGAITLAKMANLSGTSQLIGSSSTTTSPANISLGSTLQMSGTTLSVNTSTLMLLVPSSVNGDLATLNASGQVIDSGVSINNSGLTSASLWNAAKLAITTNSWFAGTNPNTTAPTDRPATSSVLYVGTDASLWIWNGSVYISLIGAKVPTSVTRTFTTSTGASGFQISTINGAFVHYSVSISTTIGVGGTSTGTVNLEVSPTNSATPASWIVNGVISNSQSFAGLITLSSVQVQGGQLCTYVPAGYFVKLRTTSSGTTSFSYVAGIEVLDN.

Belongs to the IIV-6 261R/396L/443R family.

This is an uncharacterized protein from Invertebrate iridescent virus 6 (IIV-6).